The following is a 426-amino-acid chain: Putative phosphate permease CT_962 (426 aa).

Helical transmembrane passes span 1–21, 37–57, 83–103, 104–124, 140–160, 183–203, 207–227, 260–280, 309–329, 365–385, and 399–419; these read MWLLLVCVVVGGFYTAWNIGA, LTLKQAVLIAAVFEFLGAVLL, VFGMTAALLATGVWLQIASFC, GWPVSTTHAIVGAVLGFGIIL, VSWLASPIIGGYFAFLIFSFI, AIIIFALGLVLILSGAVAPVI, PALRIVCGLSLFAFFFTIWGI, LIVERIFAYLQMIIACFMSFA, VLLVFMSLGGLGLVCGLATWG, LGFPISTTHVVVGSVLGIGFA, and IVLSWFITVPAGAALSIVFFL.

The protein belongs to the inorganic phosphate transporter (PiT) (TC 2.A.20) family.

It is found in the cell membrane. Its function is as follows. Potential transporter for phosphate. In Chlamydia trachomatis serovar D (strain ATCC VR-885 / DSM 19411 / UW-3/Cx), this protein is Putative phosphate permease CT_962.